The sequence spans 681 residues: UvrABC system protein B (681 aa).

The 388-residue stretch at 32–419 folds into the Helicase ATP-binding domain; sequence ARLSRGERDV…GGEYVEQVIR (388 aa). ATP is bound at residue 45–52; sequence GATGTGKS. The short motif at 98–121 is the Beta-hairpin element; that stretch reads YYDYYQPEAYIAQTDTYIEKDSSI. In terms of domain architecture, Helicase C-terminal spans 436–602; that stretch reads QIDDLIHEIK…PLRKKIADIL (167 aa). The span at 607-616 shows a compositional bias: polar residues; that stretch reads ESKAESTAPS. The segment at 607–626 is disordered; sequence ESKAESTAPSSDAVVVSKTN. Positions 636-671 constitute a UVR domain; the sequence is RSLIDDLTTQMGTAARELKFELAGRLRDEIAELKKE.

Belongs to the UvrB family. As to quaternary structure, forms a heterotetramer with UvrA during the search for lesions. Interacts with UvrC in an incision complex.

It is found in the cytoplasm. Functionally, the UvrABC repair system catalyzes the recognition and processing of DNA lesions. A damage recognition complex composed of 2 UvrA and 2 UvrB subunits scans DNA for abnormalities. Upon binding of the UvrA(2)B(2) complex to a putative damaged site, the DNA wraps around one UvrB monomer. DNA wrap is dependent on ATP binding by UvrB and probably causes local melting of the DNA helix, facilitating insertion of UvrB beta-hairpin between the DNA strands. Then UvrB probes one DNA strand for the presence of a lesion. If a lesion is found the UvrA subunits dissociate and the UvrB-DNA preincision complex is formed. This complex is subsequently bound by UvrC and the second UvrB is released. If no lesion is found, the DNA wraps around the other UvrB subunit that will check the other stand for damage. The polypeptide is UvrABC system protein B (Corynebacterium diphtheriae (strain ATCC 700971 / NCTC 13129 / Biotype gravis)).